The chain runs to 257 residues: Protein orai-2 (257 aa).

The next 4 helical transmembrane spans lie at 67–84 (TSALLSGFAMVAMVEVQL), 95–115 (LIAFSACTTVLVAVHLFALLI), 149–169 (LAWGFSTVLGILLFLAEVVLL), and 199–219 (AALVSTIIMVPVGLIFVVFTI).

It belongs to the Orai family.

Its subcellular location is the membrane. Functionally, ca(2+) release-activated Ca(2+)-like (CRAC-like) channel subunit which mediates Ca(2+) influx and increase in Ca(2+)-selective current by synergy with the Ca(2+) sensor, STIM1. This is Protein orai-2 (ORAI2) from Gallus gallus (Chicken).